Here is a 354-residue protein sequence, read N- to C-terminus: Holliday junction branch migration complex subunit RuvB (354 aa).

The disordered stretch occupies residues Met1 to Leu38. The tract at residues Ser2–Tyr199 is large ATPase domain (RuvB-L). Over residues His17 to Gly30 the composition is skewed to polar residues. ATP contacts are provided by residues Leu38, Arg39, Gly80, Lys83, Thr84, Thr85, Glu146 to Phe148, Arg189, Tyr199, and Arg236. Thr84 provides a ligand contact to Mg(2+). A small ATPAse domain (RuvB-S) region spans residues Asp200 to Asp270. The interval Glu273–Leu354 is head domain (RuvB-H). Residues Arg328 and Arg333 each coordinate DNA.

Belongs to the RuvB family. As to quaternary structure, homohexamer. Forms an RuvA(8)-RuvB(12)-Holliday junction (HJ) complex. HJ DNA is sandwiched between 2 RuvA tetramers; dsDNA enters through RuvA and exits via RuvB. An RuvB hexamer assembles on each DNA strand where it exits the tetramer. Each RuvB hexamer is contacted by two RuvA subunits (via domain III) on 2 adjacent RuvB subunits; this complex drives branch migration. In the full resolvosome a probable DNA-RuvA(4)-RuvB(12)-RuvC(2) complex forms which resolves the HJ.

Its subcellular location is the cytoplasm. The catalysed reaction is ATP + H2O = ADP + phosphate + H(+). Functionally, the RuvA-RuvB-RuvC complex processes Holliday junction (HJ) DNA during genetic recombination and DNA repair, while the RuvA-RuvB complex plays an important role in the rescue of blocked DNA replication forks via replication fork reversal (RFR). RuvA specifically binds to HJ cruciform DNA, conferring on it an open structure. The RuvB hexamer acts as an ATP-dependent pump, pulling dsDNA into and through the RuvAB complex. RuvB forms 2 homohexamers on either side of HJ DNA bound by 1 or 2 RuvA tetramers; 4 subunits per hexamer contact DNA at a time. Coordinated motions by a converter formed by DNA-disengaged RuvB subunits stimulates ATP hydrolysis and nucleotide exchange. Immobilization of the converter enables RuvB to convert the ATP-contained energy into a lever motion, pulling 2 nucleotides of DNA out of the RuvA tetramer per ATP hydrolyzed, thus driving DNA branch migration. The RuvB motors rotate together with the DNA substrate, which together with the progressing nucleotide cycle form the mechanistic basis for DNA recombination by continuous HJ branch migration. Branch migration allows RuvC to scan DNA until it finds its consensus sequence, where it cleaves and resolves cruciform DNA. The polypeptide is Holliday junction branch migration complex subunit RuvB (Corynebacterium jeikeium (strain K411)).